Reading from the N-terminus, the 253-residue chain is Ditrans,polycis-undecaprenyl-diphosphate synthase ((2E,6E)-farnesyl-diphosphate specific) (253 aa).

The active site involves Asp-26. Asp-26 serves as a coordination point for Mg(2+). Substrate contacts are provided by residues 27-30 (GNGR), Trp-31, Arg-39, His-43, and 71-73 (SSE). The Proton acceptor role is filled by Asn-74. Substrate-binding residues include Trp-75, Arg-77, and Arg-194. His-199 serves as a coordination point for Mg(2+). Residue 200 to 202 (RIS) coordinates substrate. A Mg(2+)-binding site is contributed by Glu-213.

It belongs to the UPP synthase family. As to quaternary structure, homodimer. Mg(2+) is required as a cofactor.

It carries out the reaction 8 isopentenyl diphosphate + (2E,6E)-farnesyl diphosphate = di-trans,octa-cis-undecaprenyl diphosphate + 8 diphosphate. In terms of biological role, catalyzes the sequential condensation of isopentenyl diphosphate (IPP) with (2E,6E)-farnesyl diphosphate (E,E-FPP) to yield (2Z,6Z,10Z,14Z,18Z,22Z,26Z,30Z,34E,38E)-undecaprenyl diphosphate (di-trans,octa-cis-UPP). UPP is the precursor of glycosyl carrier lipid in the biosynthesis of bacterial cell wall polysaccharide components such as peptidoglycan and lipopolysaccharide. This is Ditrans,polycis-undecaprenyl-diphosphate synthase ((2E,6E)-farnesyl-diphosphate specific) from Shigella flexneri.